The following is a 502-amino-acid chain: MEKWWFNSMLSNEELEHRWGLSKSMESLGPIGNTRGSEDPIINDTDKNIHSYSWSDSGSYSCSNVDHFFGVSDIWSFISDETFLVRDSNGKGYSVYFDIENRIFEIDNDSSFLSELESSFSSYLSNGSKNDNRYYDSYMYDTKYSWNNHMNSCIDSYLRSEISIDSYISTGSDNFSDSYIYSYIFSEKVSGSDSESSSIRTSGNDSNFNVRERDNDFDRNQKYGRLWVQCENCYELNYRSFFRSKMNICEQCGYHLKMNSLDRIELSIDSGTWNPMDDDMVSMDPIEFHSMEEPYRDRIDSYQRNTGLTEAVQTGIGQLNGIPIAIGVMDFQFMGGSMGSVVGEKITRLIEYATNESIPVIMVCASGGARMQEGSLSLMQMAKISSASYNYQLNKKLFYVSILTSPTTGGVTASFGMLGDIIIAEPNAYIAFAGKRVIEQTLNKTVPDGSQVAEYSFHKGLFDPIVPRNPLKGVLSELFQLHGFFPLNQNSSGARGSVICSE.

The segment covering 191 to 202 (GSDSESSSIRTS) has biased composition (low complexity). Residues 191–212 (GSDSESSSIRTSGNDSNFNVRE) form a disordered region. Positions 226-497 (LWVQCENCYE…NQNSSGARGS (272 aa)) constitute a CoA carboxyltransferase N-terminal domain. The Zn(2+) site is built by Cys-230, Cys-233, Cys-249, and Cys-252. The C4-type zinc-finger motif lies at 230 to 252 (CENCYELNYRSFFRSKMNICEQC).

This sequence belongs to the AccD/PCCB family. In terms of assembly, acetyl-CoA carboxylase is a heterohexamer composed of biotin carboxyl carrier protein, biotin carboxylase and 2 subunits each of ACCase subunit alpha and ACCase plastid-coded subunit beta (accD). Zn(2+) is required as a cofactor.

The protein resides in the plastid. It localises to the chloroplast stroma. It carries out the reaction N(6)-carboxybiotinyl-L-lysyl-[protein] + acetyl-CoA = N(6)-biotinyl-L-lysyl-[protein] + malonyl-CoA. Its pathway is lipid metabolism; malonyl-CoA biosynthesis; malonyl-CoA from acetyl-CoA: step 1/1. In terms of biological role, component of the acetyl coenzyme A carboxylase (ACC) complex. Biotin carboxylase (BC) catalyzes the carboxylation of biotin on its carrier protein (BCCP) and then the CO(2) group is transferred by the transcarboxylase to acetyl-CoA to form malonyl-CoA. This chain is Acetyl-coenzyme A carboxylase carboxyl transferase subunit beta, chloroplastic, found in Chloranthus spicatus (Chulantree).